The sequence spans 216 residues: Protein Syd (216 aa).

This sequence belongs to the Syd family.

The protein resides in the cell inner membrane. In terms of biological role, interacts with the SecY protein in vivo. May bind preferentially to an uncomplexed state of SecY, thus functioning either as a chelating agent for excess SecY in the cell or as a regulatory factor that negatively controls the translocase function. This Shewanella frigidimarina (strain NCIMB 400) protein is Protein Syd.